The chain runs to 272 residues: GTP cyclohydrolase FolE2 (272 aa).

The protein belongs to the GTP cyclohydrolase IV family.

The enzyme catalyses GTP + H2O = 7,8-dihydroneopterin 3'-triphosphate + formate + H(+). The protein operates within cofactor biosynthesis; 7,8-dihydroneopterin triphosphate biosynthesis; 7,8-dihydroneopterin triphosphate from GTP: step 1/1. In terms of biological role, converts GTP to 7,8-dihydroneopterin triphosphate. The protein is GTP cyclohydrolase FolE2 of Aromatoleum aromaticum (strain DSM 19018 / LMG 30748 / EbN1) (Azoarcus sp. (strain EbN1)).